The following is a 1682-amino-acid chain: Collagen alpha-4(IV) chain (1682 aa).

Positions 1–32 (MRCFFRWTKSFVTAPWSLIFILFTIQYEYGSG) are cleaved as a signal peptide. The 7S domain stretch occupies residues 31-56 (SGKKYGGPCGGRNCSVCQCFPEKGSR). An N-linked (GlcNAc...) asparagine glycan is attached at asparagine 43. Disordered stretches follow at residues 56–255 (RGHP…VQPP) and 379–1453 (PGPP…FGPG). Positions 57 to 1451 (GHPGPLGPQG…TGDPGPKGFG (1395 aa)) are triple-helical region. A Cell attachment site motif is present at residues 86–88 (RGD). Over residues 103–116 (PTGVPGFPGVDGVP) the composition is skewed to low complexity. Asparagine 134 carries N-linked (GlcNAc...) asparagine glycosylation. Short sequence motifs (cell attachment site) lie at residues 137–139 (RGD) and 181–183 (RGD). Residues 396–410 (MGPPGPPGVPGPPGF) show a composition bias toward pro residues. Residues 411–426 (PGEAGVPGRLDCAPGK) show a composition bias toward low complexity. Residues 487–500 (PPGPMGPPGPPGPP) show a composition bias toward pro residues. Positions 578 to 601 (DGGDGRPGERGDPGPRGDHKDAAP) are enriched in basic and acidic residues. Short sequence motifs (cell attachment site) lie at residues 587-589 (RGD) and 593-595 (RGD). Pro residues predominate over residues 609 to 621 (LPGPPGRTGPEGP). Over residues 632–647 (QRGLPGEPGRPGTRGF) the composition is skewed to low complexity. Asparagine 661 carries N-linked (GlcNAc...) asparagine glycosylation. The span at 665-682 (PGKPGLPGLDGPPGLKGF) shows a compositional bias: low complexity. Positions 716–718 (RGD) match the Cell attachment site motif. Composition is skewed to low complexity over residues 742 to 758 (PGKDGQKGIPGDPAFGD) and 857 to 902 (PAGM…LPGL). 2 stretches are compositionally biased toward basic and acidic residues: residues 911–929 (ERGKPGPDGEPGRKGEVGE) and 938–950 (DLGERGAKGDRGL). The segment covering 969-978 (GPPGDGGFSG) has biased composition (gly residues). 2 consecutive short sequence motifs (cell attachment site) follow at residues 980–982 (RGD) and 992–994 (RGD). The span at 998–1010 (DGLPGLHRGQPGI) shows a compositional bias: low complexity. Residues 1011 to 1025 (DGPPGPPGPPGPPGS) are compositionally biased toward pro residues. Residues 1034–1044 (FPGFPGDQGDP) are compositionally biased toward low complexity. Positions 1144 to 1146 (RGD) match the Cell attachment site motif. Composition is skewed to pro residues over residues 1223 to 1235 (PGPPGRPGPPGPA), 1248 to 1272 (DPGPPGDRGPPGPDGPRGVPGPPGS), 1289 to 1304 (PGPPGSRGPPGPPGCQ), 1340 to 1351 (PGPPGRKGPVGP), and 1435 to 1444 (APGPPGPTGD). One can recognise a Collagen IV NC1 domain in the interval 1457-1682 (GFLLVLHSQT…SRCQVCMKHS (226 aa)). Intrachain disulfides connect cysteine 1472-cysteine 1561, cysteine 1505-cysteine 1558, cysteine 1517-cysteine 1523, cysteine 1580-cysteine 1678, cysteine 1614-cysteine 1675, and cysteine 1626-cysteine 1633.

It belongs to the type IV collagen family. There are six type IV collagen isoforms, alpha 1(IV)-alpha 6(IV), each of which can form a triple helix structure with 2 other chains to generate type IV collagen network. The alpha 3(IV) chain forms a triple helical protomer with alpha 4(IV) and alpha 5(IV); this triple helical structure dimerizes through NC1-NC1 domain interactions such that the alpha 3(IV), alpha 4(IV) and alpha 5(IV) chains of one protomer connect with the alpha 5(IV), alpha 4(IV) and alpha 3(IV) chains of the opposite protomer, respectively. Associates with LAMB2 at the neuromuscular junction and in GBM. In terms of processing, prolines at the third position of the tripeptide repeating unit (G-X-Y) are hydroxylated in some or all of the chains. Type IV collagens contain numerous cysteine residues which are involved in inter- and intramolecular disulfide bonding. 12 of these, located in the NC1 domain, are conserved in all known type IV collagens. Post-translationally, the trimeric structure of the NC1 domains is stabilized by covalent bonds between Lys and Met residues. In terms of tissue distribution, expressed in Bruch's membrane, outer plexiform layer, inner nuclear layer, inner plexiform layer, ganglion cell layer, inner limiting membrane and around the blood vessels of the retina (at protein level). Highly expressed in kidney and lung. Detected at lower levels in heart, muscle and skin.

Its subcellular location is the secreted. The protein localises to the extracellular space. It localises to the extracellular matrix. It is found in the basement membrane. Functionally, type IV collagen is the major structural component of glomerular basement membranes (GBM), forming a 'chicken-wire' meshwork together with laminins, proteoglycans and entactin/nidogen. The polypeptide is Collagen alpha-4(IV) chain (Mus musculus (Mouse)).